Consider the following 165-residue polypeptide: Protein SprT (165 aa).

The SprT-like domain occupies 20–163; the sequence is EKLAQANLKL…RCVHCGEQLV (144 aa). His-78 provides a ligand contact to Zn(2+). Glu-79 is an active-site residue. His-82 is a Zn(2+) binding site.

It belongs to the SprT family. It depends on Zn(2+) as a cofactor.

The protein resides in the cytoplasm. In Escherichia coli (strain K12 / MC4100 / BW2952), this protein is Protein SprT.